The sequence spans 299 residues: Probable endonuclease 4 (299 aa).

Residues His-68, His-110, Glu-145, Asp-179, His-182, His-214, Asp-227, His-229, and Glu-259 each contribute to the Zn(2+) site.

Belongs to the AP endonuclease 2 family. The cofactor is Zn(2+).

The catalysed reaction is Endonucleolytic cleavage to 5'-phosphooligonucleotide end-products.. In terms of biological role, endonuclease IV plays a role in DNA repair. It cleaves phosphodiester bonds at apurinic or apyrimidinic (AP) sites, generating a 3'-hydroxyl group and a 5'-terminal sugar phosphate. This chain is Probable endonuclease 4, found in Exiguobacterium sibiricum (strain DSM 17290 / CCUG 55495 / CIP 109462 / JCM 13490 / 255-15).